The following is a 246-amino-acid chain: Bis(5'-nucleosyl)-tetraphosphatase PrpE [asymmetrical] (246 aa).

It belongs to the PrpE family. It depends on Ni(2+) as a cofactor.

The enzyme catalyses P(1),P(4)-bis(5'-guanosyl) tetraphosphate + H2O = GMP + GTP + 2 H(+). In terms of biological role, asymmetrically hydrolyzes Ap4p to yield AMP and ATP. The protein is Bis(5'-nucleosyl)-tetraphosphatase PrpE [asymmetrical] of Bacillus thuringiensis subsp. konkukian (strain 97-27).